The chain runs to 494 residues: UPF0371 protein SPJ_0333 (494 aa).

This sequence belongs to the UPF0371 family.

The protein is UPF0371 protein SPJ_0333 of Streptococcus pneumoniae (strain JJA).